The sequence spans 493 residues: MLKALFLTMLTLALVKSQDTEETITYTQCTDGYEWDPVRQQCKDIDECDIVPDACKGGMKCVNHYGGYLCLPKTAQIIVNNEQPQQETQPAEGTSGATTGVVAASSMATSGVLPGGGFVASAAAVAGPEMQTGRNNFVIRRNPADPQRIPSNPSHRIQCAAGYEQSEHNVCQDIDECTAGTHNCRADQVCINLRGSFACQCPPGYQKRGEQCVDIDECTIPPYCHQRCVNTPGSFYCQCSPGFQLAANNYTCVDINECDASNQCAQQCYNILGSFICQCNQGYELSSDRLNCEDIDECRTSSYLCQYQCVNEPGKFSCMCPQGYQVVRSRTCQDINECETTNECREDEMCWNYHGGFRCYPRNPCQDPYILTPENRCVCPVSNAMCRELPQSIVYKYMSIRSDRSVPSDIFQIQATTIYANTINTFRIKSGNENGEFYLRQTSPVSAMLVLVKSLSGPREHIVDLEMLTVSSIGTFRTSSVLRLTIIVGPFSF.

The first 17 residues, 1–17 (MLKALFLTMLTLALVKS), serve as a signal peptide directing secretion. The 46-residue stretch at 26 to 71 (YTQCTDGYEWDPVRQQCKDIDECDIVPDACKGGMKCVNHYGGYLCL) folds into the EGF-like 1; atypical domain. Residues 173-213 (DIDECTAGTHNCRADQVCINLRGSFACQCPPGYQKRGEQCV) enclose the EGF-like 2; calcium-binding domain. 15 cysteine pairs are disulfide-bonded: Cys177–Cys190, Cys184–Cys199, Cys201–Cys212, Cys218–Cys228, Cys224–Cys237, Cys239–Cys252, Cys258–Cys268, Cys264–Cys277, Cys279–Cys292, Cys298–Cys309, Cys305–Cys318, Cys320–Cys332, Cys338–Cys350, Cys344–Cys359, and Cys365–Cys377. The EGF-like 3; calcium-binding domain occupies 214–253 (DIDECTIPPYCHQRCVNTPGSFYCQCSPGFQLAANNYTCV). A glycan (N-linked (GlcNAc...) asparagine) is linked at Asn249. The region spanning 254-293 (DINECDASNQCAQQCYNILGSFICQCNQGYELSSDRLNCE) is the EGF-like 4; calcium-binding domain. The segment at 259–493 (DASNQCAQQC…LTIIVGPFSF (235 aa)) is mediates interaction with TIMP3. The 40-residue stretch at 294–333 (DIDECRTSSYLCQYQCVNEPGKFSCMCPQGYQVVRSRTCQ) folds into the EGF-like 5; calcium-binding domain. Residues 334-378 (DINECETTNECREDEMCWNYHGGFRCYPRNPCQDPYILTPENRCV) form the EGF-like 6; calcium-binding domain.

Belongs to the fibulin family. In terms of assembly, interacts with ECM1. Interacts with TIMP3. In terms of tissue distribution, in the eye, associated with photoreceptor outer and inner segment regions, the nerve fiber layer, outer nuclear layer and inner and outer plexiform layers of the retina.

The protein localises to the secreted. It is found in the extracellular space. It localises to the extracellular matrix. Its function is as follows. Binds EGFR, the EGF receptor, inducing EGFR autophosphorylation and the activation of downstream signaling pathways. May play a role in cell adhesion and migration. May function as a negative regulator of chondrocyte differentiation. In the olfactory epithelium, it may regulate glial cell migration, differentiation and the ability of glial cells to support neuronal neurite outgrowth. The polypeptide is EGF-containing fibulin-like extracellular matrix protein 1 (EFEMP1) (Homo sapiens (Human)).